The following is a 282-amino-acid chain: Chlorite dismutase (282 aa).

A signal peptide spans 1-31 (MTNLSIHNFKLSLVAAVIGSAMVMTSSPVAA). A Ca(2+)-binding site is contributed by Glu104. His204 is a heme binding site. Arg217 acts as the Proton acceptor in catalysis. Ca(2+)-binding residues include Asp226 and Thr265.

This sequence belongs to the chlorite dismutase family. Homopentamer. Heme b serves as cofactor.

The protein localises to the periplasm. The catalysed reaction is chloride + O2 = chlorite. Functionally, catalyzes the heme-dependent decomposition of chlorite to O(2) and chloride with high efficiency and specificity. Used to detoxify chlorite, a by-product of the reduction of perchlorate, a primarily anthropogenic pollutant, in perchlorate-respiring bacteria. This Dechloromonas aromatica (strain RCB) protein is Chlorite dismutase.